A 78-amino-acid polypeptide reads, in one-letter code: Small ribosomal subunit protein bS18 (78 aa).

It belongs to the bacterial ribosomal protein bS18 family. In terms of assembly, part of the 30S ribosomal subunit. Forms a tight heterodimer with protein bS6.

In terms of biological role, binds as a heterodimer with protein bS6 to the central domain of the 16S rRNA, where it helps stabilize the platform of the 30S subunit. This is Small ribosomal subunit protein bS18 from Alkaliphilus oremlandii (strain OhILAs) (Clostridium oremlandii (strain OhILAs)).